An 80-amino-acid chain; its full sequence is Protein FAM229B (80 aa).

The tract at residues 1-45 (MPFRFGTQPRRFPVEGGDSSIELESGLSSSASCTGKETSPNRQLR) is disordered. A compositionally biased stretch (low complexity) spans 15 to 32 (EGGDSSIELESGLSSSAS). Residues 33–42 (CTGKETSPNR) are compositionally biased toward polar residues.

Belongs to the FAM229 family.

The polypeptide is Protein FAM229B (Fam229b) (Mus musculus (Mouse)).